The chain runs to 309 residues: Taste receptor type 2 member 20 (309 aa).

Over 1–6 (MMSFLH) the chain is Extracellular. Residues 7 to 27 (IVFSILVVVAFILGNFANGFI) form a helical membrane-spanning segment. Over 28 to 46 (ALINFIAWVKRQKISSADQ) the chain is Cytoplasmic. Residues 47–67 (IIAALAVSRVGLLWVILLHWY) traverse the membrane as a helical segment. Over 68 to 79 (STVLNPTSSNLK) the chain is Extracellular. Residues 80–100 (VTIFISNAWAVTNHFSIWLAA) traverse the membrane as a helical segment. Topologically, residues 101–125 (SLSIFYLLKIVNFSRLIFHHLKRKA) are cytoplasmic. Residues 126–146 (KSVVLVIVLGSLFFLVCHLVM) form a helical membrane-spanning segment. Over 147-178 (KSTYINVWTEEYEGNVTWKIKLRNAMHLSNLT) the chain is Extracellular. N161 and N176 each carry an N-linked (GlcNAc...) asparagine glycan. Residues 179-199 (VAMLANLIPFTLTLISFLLLI) form a helical membrane-spanning segment. Topologically, residues 200 to 229 (YSLCKHLKKMQLHGKGSQDPSTKIHIKALQ) are cytoplasmic. Residues 230–250 (TVTSFLILLAIYFLCLITSFW) traverse the membrane as a helical segment. Topologically, residues 251–259 (NSKMRPKEI) are extracellular. Residues 260 to 280 (VLMLCQAFGIIYPSFHSFILI) traverse the membrane as a helical segment. Over 281 to 309 (WGNKTLKQTFLSVLWRVTCWAKGQNQSTP) the chain is Cytoplasmic.

It belongs to the G-protein coupled receptor T2R family.

It is found in the membrane. Its function is as follows. Receptor that may play a role in the perception of bitterness and is gustducin-linked. May play a role in sensing the chemical composition of the gastrointestinal content. The activity of this receptor may stimulate alpha gustducin, mediate PLC-beta-2 activation and lead to the gating of TRPM5. In Gorilla gorilla gorilla (Western lowland gorilla), this protein is Taste receptor type 2 member 20 (TAS2R20).